The following is a 2368-amino-acid chain: MTSSGDSSPQIPIAIVGLGCRFPGDADSPKKFWDILKEGRDAYSPRTDRWNPDAFYHPNKDRANTQPTKGGHFLKQDPYVFDPSFFNITATEAIALDPKQRLALEVAYEALENAGFPLQKVAGSQTACYMGSAMADYRDSISRDFGHAPKYFVLGTCEEMISNRISHFFDMHGPSATVHTACSSSLVATHVACQSLRSGEADMALAGGVGIMLTPDSSLQLNNMSFLNPEGHSRSFDADAGGYARGEGCGILVMKRLDDAVRDGDNIRAVIRGSGVNSDGWTQGVTMPSPEAQAALIKQVFGKNKLDYDTIQYVEAHGTGTKAGDPVETKAIYDTIGRGINKSRKLWIGSVKPNIGHLEAAAGVAGIIKGVLSLENSAIPPNIYFSKPNPAIKLDEWNMAVPTKLVNWPVAQTKRMTVSGFGMGGTNGLVVLEAYVPERLLNGATKVTTAKDTAHSGKRLFVCSSQDQAGFKRIGEAFVDHLDNLGPIASSSGYLANLAHTLSTARAGLSWRTTFVADSKAELREHLTTTLGQDATRVSDTQAQRIGFVFTGQGAQWAGMGVEMLERPVFGASVAESAKLLRSFGCTWDPATELQKAAKESRLAVPEISQPICTIIQIALVDELKSWGVSPAKVVGHSSGEIAAAYTIGALSHRDAMAVAYFRGMASTALKTSAPHLEGGMMAVGTSAEAAQTIIAETKNSISGDITIACVNSPSSVTLSGDAKALEELRKILDARSVFARRLKVDVAYHSSHMNVAAPEYQQSIADIEPRLCSDEVEEGSLPVMVSSVTTEQVSPELLGTYYWIRNLVSPVQFSDALRELVAPGGSDKNDVDLLIEIGPHSALGGPIEQILSFHNVQKVDYKSVLTRGQNALDTSLSLASDLFVRGIQLDMEKVNGDSDCHLLNDLPSYPWNHSKAFRADSRIQRELLQSKHPRHSMIGLKQPMLDESQHVWRNYVRLTDEPWLRGHVVGGTALVPGAGMLSMIFEAVQQLVDPGKPAHSLRVRDVKFSAALTLPEDTSIEVVTTLRPHLVSTSGSTPASWWEFTISSCPGTDQIQDNCRGLVAIEYTNKRSEQMIYEDVNEENSRIADFHRVRDESPLMIRREKFYEHMQKSGYNYGETFQGMETVHLGDGETAFHVKLIDIGETFSKGQLDRPFLIPGSSLDAIFQSIFGSTFKNGAFEVEKPNFLAYIGELEISLDIPGEVGYVMPGVCFSRKHGFNQQSADIFTFDKSLSRMHLAVRDFRMTEPEVGDDASDGFEPWAFTSAPHWNYAFSLLKTEELRSVLSKVTTQDAPVELLRTILHENPSASVLELIPEIGDLAIASSYQLPKGAIQPSQLRYAVAKDIPDSFIDENLVGEVFALDGVGEDDRKISADVLIVPSSLDLLEDRDAILARFLKLAGPAALMITASGLHSARSVFEAHGFQAFPGLNGIASLPGLYSHAEEPSLRQTNRGTRDTSDTDITILEPSSPSFNTTEFSKTLSSRLEDQNYSVTIRKWAGGETEEFQNTTYISLLELEQPFLDNLSDPDFQGIKNLVLGSNRLIWLTLGDDPSFGAVDGLSRVMRSELGTPKFQVMHLSGEAGLLSGPELTVRVLKSPTEDTEFRERDGLLQVIRIFESPDVNQSLRGHLENSTRILPIKQLDYPVRLTVGKPGFLDSLQFIKDRRTEAPLPENEIEIDVHASGVNFRDVMASMGLISTPILGFEASGVVTKCGSQVSQFRTGARVSFVGEHTHSTRIRADPRLVAPIPDDVSFEEAASLPIVGATAYHTLTNLARLRKGQTILIHAAAGGVGQAMIQLASHFGLVIYATVGTEDKRKLLGEKYNIPPENILNSRDASFAKGIKRLTGGRGVDCVINSLSGELLRASWGCVAPFGIFIELGLRDITDNMRLDMRPFSNVTSFTFCNILALMQQDPDAMGLVLKETFKLVSQGILTSPFPTTVFPVEQTQEAFRLMQQGKHRGKLVLSFAGDPQAPVHCEAKESLRLDGNATYLIIGGLGGLGRSMALELVASGARHLAFISRSGDSTPQAKATLAELEQRNLDFRVYRGDVSNEESFLDAMKLCSSDLPPIKGVIQMAMVLKDIIFEKMTHEQWTIPLRPKIQGTWNIHQYFDESRPLDFMVFCSSTSGIHGYPSQSQYAAGNTYQDTLAAYRRAHGLKAVAVNLTIIREVGILAEQGTTGNIAVWEEALGIKEPAFHALMKTLIAGQQGPAGSEFLPPQVSTGLGTADIMSSYNLALPDYFQDPRFGPLAVSTFSTNVAGESQSAAVSLSSKLIEATNVDQASEIITEGLVTKVADMLQIPVSEVDASRPMYRYGVDSLVALEVRNWIVKEMKATIALLEILAAVPMNVLAKTIASRSKHLAATLD.

Residues 10 to 434 (QIPIAIVGLG…GTNGLVVLEA (425 aa)) enclose the Ketosynthase family 3 (KS3) domain. Catalysis depends on for beta-ketoacyl synthase activity residues Cys182, His317, and His357. Residues 548-877 (FVFTGQGAQW…RGQNALDTSL (330 aa)) are malonyl-CoA:ACP transacylase (MAT) domain. Residue Ser638 is the For malonyltransferase activity of the active site. Residues 936-1071 (HSMIGLKQPM…GLVAIEYTNK (136 aa)) form an N-terminal hotdog fold region. The tract at residues 936–1175 (HSMIGLKQPM…AIFQSIFGST (240 aa)) is dehydratase (DH) domain. The PKS/mFAS DH domain occupies 936 to 1255 (HSMIGLKQPM…MTEPEVGDDA (320 aa)). His968 acts as the Proton acceptor; for dehydratase activity in catalysis. Residues 1099 to 1255 (PLMIRREKFY…MTEPEVGDDA (157 aa)) form a C-terminal hotdog fold region. The Proton donor; for dehydratase activity role is filled by Asp1165. The enoylreductase (ER) domain stretch occupies residues 1655–1967 (GFLDSLQFIK…QGKHRGKLVL (313 aa)). The interval 1991–2170 (ATYLIIGGLG…AVAVNLTIIR (180 aa)) is catalytic ketoreductase (KRc) domain. Residues 2283–2360 (QASEIITEGL…VLAKTIASRS (78 aa)) form the Carrier domain. At Ser2320 the chain carries O-(pantetheine 4'-phosphoryl)serine.

The protein operates within secondary metabolite biosynthesis. Highly reducing polyketide synthase; part of the gene cluster that mediates the biosynthesis of cladosporin, a tricyclic octaketide that acts as an antimalarial agent though inhibition of the Plasmodium falciparum lysyl-tRNA synthetase. The highly reducing polyketide synthase cla2 is responsible for biosynthesis up to the pentaketide stage, including of the tetrahydropyran (THP) ring, whereas the three subsequent ketide extensions with no reduction are catalyzed by the non-reducing polyketide synthase cla3. This is Highly reducing polyketide synthase cla2 from Cladosporium cladosporioides.